The following is an 878-amino-acid chain: Alanine--tRNA ligase (878 aa).

Zn(2+)-binding residues include His-566, His-570, Cys-668, and His-672.

The protein belongs to the class-II aminoacyl-tRNA synthetase family. Zn(2+) serves as cofactor.

Its subcellular location is the cytoplasm. The catalysed reaction is tRNA(Ala) + L-alanine + ATP = L-alanyl-tRNA(Ala) + AMP + diphosphate. In terms of biological role, catalyzes the attachment of alanine to tRNA(Ala) in a two-step reaction: alanine is first activated by ATP to form Ala-AMP and then transferred to the acceptor end of tRNA(Ala). Also edits incorrectly charged Ser-tRNA(Ala) and Gly-tRNA(Ala) via its editing domain. In Geobacillus thermodenitrificans (strain NG80-2), this protein is Alanine--tRNA ligase.